A 447-amino-acid polypeptide reads, in one-letter code: 2-oxoadipate dioxygenase/decarboxylase (447 aa).

His-68, Arg-72, and His-224 together coordinate 2-oxoadipate. Position 68 (His-68) interacts with Fe(2+). Residues His-224 and Glu-290 each contribute to the Fe(2+) site. Val-391 is a 2-oxoadipate binding site.

Belongs to the 2-oxoadipate dioxygenase/decarboxylase family. It depends on Fe(2+) as a cofactor.

The catalysed reaction is 2-oxoadipate + O2 = (R)-2-hydroxyglutarate + CO2. Its function is as follows. Catalyzes the decarboxylation and hydroxylation of 2-oxoadipate (2OA) to form D-2-hydroxyglutarate (D-2-HGA). This Escherichia coli (strain K12) protein is 2-oxoadipate dioxygenase/decarboxylase (ydcJ).